Consider the following 219-residue polypeptide: Thiamine-phosphate synthase (219 aa).

Residues 45 to 49 (QYREK) and N77 each bind 4-amino-2-methyl-5-(diphosphooxymethyl)pyrimidine. Residues D78 and D97 each coordinate Mg(2+). T116 contacts 4-amino-2-methyl-5-(diphosphooxymethyl)pyrimidine. 2-[(2R,5Z)-2-carboxy-4-methylthiazol-5(2H)-ylidene]ethyl phosphate is bound at residue 142 to 144 (SFT). K145 serves as a coordination point for 4-amino-2-methyl-5-(diphosphooxymethyl)pyrimidine. 2-[(2R,5Z)-2-carboxy-4-methylthiazol-5(2H)-ylidene]ethyl phosphate-binding positions include G173 and 193 to 194 (VT).

It belongs to the thiamine-phosphate synthase family. The cofactor is Mg(2+).

The enzyme catalyses 2-[(2R,5Z)-2-carboxy-4-methylthiazol-5(2H)-ylidene]ethyl phosphate + 4-amino-2-methyl-5-(diphosphooxymethyl)pyrimidine + 2 H(+) = thiamine phosphate + CO2 + diphosphate. The catalysed reaction is 2-(2-carboxy-4-methylthiazol-5-yl)ethyl phosphate + 4-amino-2-methyl-5-(diphosphooxymethyl)pyrimidine + 2 H(+) = thiamine phosphate + CO2 + diphosphate. It catalyses the reaction 4-methyl-5-(2-phosphooxyethyl)-thiazole + 4-amino-2-methyl-5-(diphosphooxymethyl)pyrimidine + H(+) = thiamine phosphate + diphosphate. It participates in cofactor biosynthesis; thiamine diphosphate biosynthesis; thiamine phosphate from 4-amino-2-methyl-5-diphosphomethylpyrimidine and 4-methyl-5-(2-phosphoethyl)-thiazole: step 1/1. Functionally, condenses 4-methyl-5-(beta-hydroxyethyl)thiazole monophosphate (THZ-P) and 2-methyl-4-amino-5-hydroxymethyl pyrimidine pyrophosphate (HMP-PP) to form thiamine monophosphate (TMP). The polypeptide is Thiamine-phosphate synthase (Caldicellulosiruptor bescii (strain ATCC BAA-1888 / DSM 6725 / KCTC 15123 / Z-1320) (Anaerocellum thermophilum)).